The chain runs to 528 residues: Peptide chain release factor 3 (528 aa).

Residues 10-280 (AKRRTFGIIS…IDMAPAPGPR (271 aa)) enclose the tr-type G domain. Residues 19-26 (SHPDAGKT), 87-91 (DTPGH), and 141-144 (NKLD) contribute to the GTP site.

This sequence belongs to the TRAFAC class translation factor GTPase superfamily. Classic translation factor GTPase family. PrfC subfamily.

Its subcellular location is the cytoplasm. Its function is as follows. Increases the formation of ribosomal termination complexes and stimulates activities of RF-1 and RF-2. It binds guanine nucleotides and has strong preference for UGA stop codons. It may interact directly with the ribosome. The stimulation of RF-1 and RF-2 is significantly reduced by GTP and GDP, but not by GMP. The polypeptide is Peptide chain release factor 3 (Desulfotalea psychrophila (strain LSv54 / DSM 12343)).